We begin with the raw amino-acid sequence, 400 residues long: Chorismate synthase (400 aa).

Residues arginine 40 and arginine 46 each contribute to the NADP(+) site. FMN-binding positions include 135–137 (RAS), 257–258 (QA), glycine 301, 316–320 (KPIST), and arginine 342.

It belongs to the chorismate synthase family. As to quaternary structure, homotetramer. The cofactor is FMNH2.

The catalysed reaction is 5-O-(1-carboxyvinyl)-3-phosphoshikimate = chorismate + phosphate. It functions in the pathway metabolic intermediate biosynthesis; chorismate biosynthesis; chorismate from D-erythrose 4-phosphate and phosphoenolpyruvate: step 7/7. Catalyzes the anti-1,4-elimination of the C-3 phosphate and the C-6 proR hydrogen from 5-enolpyruvylshikimate-3-phosphate (EPSP) to yield chorismate, which is the branch point compound that serves as the starting substrate for the three terminal pathways of aromatic amino acid biosynthesis. This reaction introduces a second double bond into the aromatic ring system. This is Chorismate synthase from Tropheryma whipplei (strain TW08/27) (Whipple's bacillus).